The primary structure comprises 882 residues: Homeobox-leucine zipper protein ROC3 (882 aa).

Residues 104 to 144 are disordered; that stretch reads DVDDDHKPQHSGHDQPPDAAQPSGAAGGNAKKKRYHRHTAH. Basic and acidic residues predominate over residues 107 to 119; that stretch reads DDHKPQHSGHDQP. The span at 133-143 shows a compositional bias: basic residues; that stretch reads AKKKRYHRHTA. Residues 134-193 constitute a DNA-binding region (homeobox); that stretch reads KKKRYHRHTAHQIQQMEALFKECPHPDDKQRLKLSQELGLKPRQVKFWFQNRRTQMKAQQ. A coiled-coil region spans residues 200 to 263; sequence ILRAENENLK…LDRLACIATR (64 aa). The START domain occupies 340–584; the sequence is QEQDKQLVVD…LQRQCERLAS (245 aa). Residues 782-816 are compositionally biased toward low complexity; it reads AAAPTISSSTTTTTGNGNGETSSTPPRNSSSNNNN. Positions 782–820 are disordered; it reads AAAPTISSSTTTTTGNGNGETSSTPPRNSSSNNNNADEL.

Belongs to the HD-ZIP homeobox family. Class IV subfamily.

Its subcellular location is the nucleus. Probable transcription factor. The protein is Homeobox-leucine zipper protein ROC3 (ROC3) of Oryza sativa subsp. japonica (Rice).